Reading from the N-terminus, the 483-residue chain is Aspartyl/glutamyl-tRNA(Asn/Gln) amidotransferase subunit B (483 aa).

It belongs to the GatB/GatE family. GatB subfamily. In terms of assembly, heterotrimer of A, B and C subunits.

It carries out the reaction L-glutamyl-tRNA(Gln) + L-glutamine + ATP + H2O = L-glutaminyl-tRNA(Gln) + L-glutamate + ADP + phosphate + H(+). The catalysed reaction is L-aspartyl-tRNA(Asn) + L-glutamine + ATP + H2O = L-asparaginyl-tRNA(Asn) + L-glutamate + ADP + phosphate + 2 H(+). Allows the formation of correctly charged Asn-tRNA(Asn) or Gln-tRNA(Gln) through the transamidation of misacylated Asp-tRNA(Asn) or Glu-tRNA(Gln) in organisms which lack either or both of asparaginyl-tRNA or glutaminyl-tRNA synthetases. The reaction takes place in the presence of glutamine and ATP through an activated phospho-Asp-tRNA(Asn) or phospho-Glu-tRNA(Gln). The protein is Aspartyl/glutamyl-tRNA(Asn/Gln) amidotransferase subunit B of Lachnospira eligens (strain ATCC 27750 / DSM 3376 / VPI C15-48 / C15-B4) (Eubacterium eligens).